A 117-amino-acid chain; its full sequence is MDMMVPAQLLGLLLLWFPGSRCDIQMTQSPSSVSASVGDRVTITCRASQGISSWLAWYQQKPGKAPKLLIYAASSLQSGVPSRFSGSGSGTDFTLTISSLQPEDFATYYCQQANSFP.

The N-terminal stretch at 1–22 (MDMMVPAQLLGLLLLWFPGSRC) is a signal peptide. A framework-1 region spans residues 23–45 (DIQMTQSPSSVSASVGDRVTITC). Residues 24–117 (IQMTQSPSSV…YYCQQANSFP (94 aa)) form the Ig-like domain. A disulfide bond links Cys45 and Cys110. Positions 46–56 (RASQGISSWLA) are complementarity-determining-1. A framework-2 region spans residues 57 to 71 (WYQQKPGKAPKLLIY). Residues 72-78 (AASSLQS) are complementarity-determining-2. The segment at 79-110 (GVPSRFSGSGSGTDFTLTISSLQPEDFATYYC) is framework-3. Residues 111–117 (QQANSFP) are complementarity-determining-3.

Immunoglobulins are composed of two identical heavy chains and two identical light chains; disulfide-linked.

It is found in the secreted. Its subcellular location is the cell membrane. Its function is as follows. V region of the variable domain of immunoglobulin light chains that participates in the antigen recognition. Immunoglobulins, also known as antibodies, are membrane-bound or secreted glycoproteins produced by B lymphocytes. In the recognition phase of humoral immunity, the membrane-bound immunoglobulins serve as receptors which, upon binding of a specific antigen, trigger the clonal expansion and differentiation of B lymphocytes into immunoglobulins-secreting plasma cells. Secreted immunoglobulins mediate the effector phase of humoral immunity, which results in the elimination of bound antigens. The antigen binding site is formed by the variable domain of one heavy chain, together with that of its associated light chain. Thus, each immunoglobulin has two antigen binding sites with remarkable affinity for a particular antigen. The variable domains are assembled by a process called V-(D)-J rearrangement and can then be subjected to somatic hypermutations which, after exposure to antigen and selection, allow affinity maturation for a particular antigen. This is Immunoglobulin kappa variable 1D-12 from Homo sapiens (Human).